We begin with the raw amino-acid sequence, 205 residues long: Guanylate kinase (205 aa).

In terms of domain architecture, Guanylate kinase-like spans glycine 6–serine 184. ATP is bound at residue glycine 13–glycine 20.

Belongs to the guanylate kinase family.

The protein resides in the cytoplasm. The catalysed reaction is GMP + ATP = GDP + ADP. Functionally, essential for recycling GMP and indirectly, cGMP. The protein is Guanylate kinase of Clostridioides difficile (strain 630) (Peptoclostridium difficile).